The following is a 247-amino-acid chain: Phosphoribosylaminoimidazole-succinocarboxamide synthase (247 aa).

It belongs to the SAICAR synthetase family.

The catalysed reaction is 5-amino-1-(5-phospho-D-ribosyl)imidazole-4-carboxylate + L-aspartate + ATP = (2S)-2-[5-amino-1-(5-phospho-beta-D-ribosyl)imidazole-4-carboxamido]succinate + ADP + phosphate + 2 H(+). It functions in the pathway purine metabolism; IMP biosynthesis via de novo pathway; 5-amino-1-(5-phospho-D-ribosyl)imidazole-4-carboxamide from 5-amino-1-(5-phospho-D-ribosyl)imidazole-4-carboxylate: step 1/2. In Synechococcus sp. (strain JA-2-3B'a(2-13)) (Cyanobacteria bacterium Yellowstone B-Prime), this protein is Phosphoribosylaminoimidazole-succinocarboxamide synthase.